Consider the following 42-residue polypeptide: Small protein MntS (42 aa).

It localises to the cytoplasm. In terms of biological role, required for repression of mntH by MntR. May function as a chaperone that makes manganese more available by delivering it to the necessary cellular locations when manganese is limiting. The sequence is that of Small protein MntS (mntS) from Escherichia coli (strain K12).